A 245-amino-acid polypeptide reads, in one-letter code: tRNA pseudouridine synthase A (245 aa).

Catalysis depends on D52, which acts as the Nucleophile. A substrate-binding site is contributed by Y111.

This sequence belongs to the tRNA pseudouridine synthase TruA family. In terms of assembly, homodimer.

It catalyses the reaction uridine(38/39/40) in tRNA = pseudouridine(38/39/40) in tRNA. Its function is as follows. Formation of pseudouridine at positions 38, 39 and 40 in the anticodon stem and loop of transfer RNAs. The polypeptide is tRNA pseudouridine synthase A (Zymomonas mobilis subsp. mobilis (strain ATCC 31821 / ZM4 / CP4)).